A 193-amino-acid polypeptide reads, in one-letter code: Segregation and condensation protein B (193 aa).

It belongs to the ScpB family. In terms of assembly, homodimer. Homodimerization may be required to stabilize the binding of ScpA to the Smc head domains. Component of a cohesin-like complex composed of ScpA, ScpB and the Smc homodimer, in which ScpA and ScpB bind to the head domain of Smc. The presence of the three proteins is required for the association of the complex with DNA.

The protein localises to the cytoplasm. Its function is as follows. Participates in chromosomal partition during cell division. May act via the formation of a condensin-like complex containing Smc and ScpA that pull DNA away from mid-cell into both cell halves. This chain is Segregation and condensation protein B, found in Streptococcus thermophilus (strain ATCC BAA-250 / LMG 18311).